The following is a 357-amino-acid chain: DNA replication and repair protein RecF (357 aa).

An ATP-binding site is contributed by 31 to 38; that stretch reads GQNGAGKT.

The protein belongs to the RecF family.

It localises to the cytoplasm. Functionally, the RecF protein is involved in DNA metabolism; it is required for DNA replication and normal SOS inducibility. RecF binds preferentially to single-stranded, linear DNA. It also seems to bind ATP. This chain is DNA replication and repair protein RecF, found in Coxiella burnetii (strain CbuG_Q212) (Coxiella burnetii (strain Q212)).